Here is a 322-residue protein sequence, read N- to C-terminus: UV DNA damage endonuclease (322 aa).

The protein belongs to the uve1/UvsE family.

In terms of biological role, component in a DNA repair pathway. Removal of UV LIGHT damaged nucleotides. Recognizes pyrimidine dimers and cleave a phosphodiester bond immediately 5' to the lesion. The polypeptide is UV DNA damage endonuclease (Halalkalibacterium halodurans (strain ATCC BAA-125 / DSM 18197 / FERM 7344 / JCM 9153 / C-125) (Bacillus halodurans)).